Reading from the N-terminus, the 362-residue chain is Epoxyqueuosine reductase (362 aa).

Asp-143 acts as the Proton donor in catalysis. A 4Fe-4S ferredoxin-type domain is found at 191–220 (PDSPKHQDSCGKCQACIKLCPTGAIQPGKM). Residues Cys-200, Cys-203, Cys-206, Cys-210, Cys-226, Cys-253, Cys-256, and Cys-260 each coordinate [4Fe-4S] cluster.

It belongs to the QueG family. Monomer. Requires cob(II)alamin as cofactor. [4Fe-4S] cluster serves as cofactor.

The protein resides in the cytoplasm. The catalysed reaction is epoxyqueuosine(34) in tRNA + AH2 = queuosine(34) in tRNA + A + H2O. It participates in tRNA modification; tRNA-queuosine biosynthesis. Its function is as follows. Catalyzes the conversion of epoxyqueuosine (oQ) to queuosine (Q), which is a hypermodified base found in the wobble positions of tRNA(Asp), tRNA(Asn), tRNA(His) and tRNA(Tyr). This chain is Epoxyqueuosine reductase, found in Francisella cf. novicida (strain Fx1).